A 98-amino-acid polypeptide reads, in one-letter code: NADH-ubiquinone oxidoreductase chain 4L (98 aa).

A run of 3 helical transmembrane segments spans residues 1 to 21 (MSLV…GLLM), 29 to 49 (SLLC…LTIL), and 59 to 79 (MPII…SLLV).

It belongs to the complex I subunit 4L family. In terms of assembly, core subunit of respiratory chain NADH dehydrogenase (Complex I) which is composed of 45 different subunits.

It is found in the mitochondrion inner membrane. The enzyme catalyses a ubiquinone + NADH + 5 H(+)(in) = a ubiquinol + NAD(+) + 4 H(+)(out). Core subunit of the mitochondrial membrane respiratory chain NADH dehydrogenase (Complex I) which catalyzes electron transfer from NADH through the respiratory chain, using ubiquinone as an electron acceptor. Part of the enzyme membrane arm which is embedded in the lipid bilayer and involved in proton translocation. The polypeptide is NADH-ubiquinone oxidoreductase chain 4L (MT-ND4L) (Cervus elaphus (Red deer)).